Here is a 247-residue protein sequence, read N- to C-terminus: 7-carboxy-7-deazaguanine synthase (247 aa).

Residues 15-17 (IQG) and R30 contribute to the substrate site. A Radical SAM core domain is found at 21-247 (LVGRRQIFVR…PQMHRALGLR (227 aa)). Positions 34, 38, and 41 each coordinate [4Fe-4S] cluster. T43 is a binding site for Mg(2+). T78 lines the substrate pocket. G80 provides a ligand contact to S-adenosyl-L-methionine.

It belongs to the radical SAM superfamily. 7-carboxy-7-deazaguanine synthase family. Homodimer. It depends on [4Fe-4S] cluster as a cofactor. The cofactor is S-adenosyl-L-methionine. Mg(2+) serves as cofactor.

It carries out the reaction 6-carboxy-5,6,7,8-tetrahydropterin + H(+) = 7-carboxy-7-deazaguanine + NH4(+). It functions in the pathway purine metabolism; 7-cyano-7-deazaguanine biosynthesis. Functionally, catalyzes the complex heterocyclic radical-mediated conversion of 6-carboxy-5,6,7,8-tetrahydropterin (CPH4) to 7-carboxy-7-deazaguanine (CDG), a step common to the biosynthetic pathways of all 7-deazapurine-containing compounds. This is 7-carboxy-7-deazaguanine synthase from Methanothermobacter thermautotrophicus (strain ATCC 29096 / DSM 1053 / JCM 10044 / NBRC 100330 / Delta H) (Methanobacterium thermoautotrophicum).